A 203-amino-acid chain; its full sequence is Proteasome subunit beta 2 (203 aa).

Residues 1–9 (MGEEFQVGA) constitute a propeptide, removed in mature form; by autocatalysis. The Nucleophile role is filled by threonine 10.

The protein belongs to the peptidase T1B family. In terms of assembly, the 20S proteasome core is composed of 14 alpha and 14 beta subunits that assemble into four stacked heptameric rings, resulting in a barrel-shaped structure. The two inner rings, each composed of seven catalytic beta subunits, are sandwiched by two outer rings, each composed of seven alpha subunits. The catalytic chamber with the active sites is on the inside of the barrel. Has a gated structure, the ends of the cylinder being occluded by the N-termini of the alpha-subunits. Is capped at one or both ends by the proteasome regulatory ATPase, PAN.

The protein localises to the cytoplasm. The enzyme catalyses Cleavage of peptide bonds with very broad specificity.. The formation of the proteasomal ATPase PAN-20S proteasome complex, via the docking of the C-termini of PAN into the intersubunit pockets in the alpha-rings, triggers opening of the gate for substrate entry. Interconversion between the open-gate and close-gate conformations leads to a dynamic regulation of the 20S proteasome proteolysis activity. In terms of biological role, component of the proteasome core, a large protease complex with broad specificity involved in protein degradation. In Pyrobaculum neutrophilum (strain DSM 2338 / JCM 9278 / NBRC 100436 / V24Sta) (Thermoproteus neutrophilus), this protein is Proteasome subunit beta 2.